A 457-amino-acid polypeptide reads, in one-letter code: F-box/LRR-repeat protein At2g42730 (457 aa).

One can recognise an F-box domain in the interval 4-50; sequence KDVISRLPDEVLGRILSLISTKEAVSTSVLSKRWKNMFVLVSNLDID. LRR repeat units follow at residues 265 to 288, 292 to 315, and 318 to 343; these read MDETRMVGVRNGSLGSIPADMRNL, IRNVRILHLSSHTLELLYFSCKEM, and FDSLVSLSIGNDKARGWQMLPLLIKN.

This Arabidopsis thaliana (Mouse-ear cress) protein is F-box/LRR-repeat protein At2g42730.